Here is a 307-residue protein sequence, read N- to C-terminus: Replication termination factor 2 (307 aa).

The disordered stretch occupies residues 193–296 (AKLEKKTKKP…SSAKRSKEES (104 aa)). A compositionally biased stretch (basic and acidic residues) spans 227-241 (GKPEEADPDPREKKS). Phosphoserine is present on Ser288.

It belongs to the rtf2 family. As to quaternary structure, interacts with DDI2; probably also interacts with DDI1. Post-translationally, undergoes proteasomal degradation, via DDI1 and DDI2. Removal from stalled replisomes and degradation are required for genome stability.

The protein localises to the chromosome. In terms of biological role, replication termination factor which is a component of the elongating replisome. Required for ATR pathway signaling upon DNA damage and has a positive activity during DNA replication. Might function to facilitate fork pausing at replication fork barriers like the rDNA. May be globally required to stimulate ATR signaling after the fork stalls or encounters a lesion. Interacts with nascent DNA. This Mus musculus (Mouse) protein is Replication termination factor 2.